We begin with the raw amino-acid sequence, 241 residues long: Ribose-5-phosphate isomerase A (241 aa).

Substrate is bound by residues 28-31, 83-86, and 96-99; these read TGST, DGAD, and KGGG. The Proton acceptor role is filled by E105. Position 123 (K123) interacts with substrate.

Belongs to the ribose 5-phosphate isomerase family. As to quaternary structure, homodimer.

It carries out the reaction aldehydo-D-ribose 5-phosphate = D-ribulose 5-phosphate. It functions in the pathway carbohydrate degradation; pentose phosphate pathway; D-ribose 5-phosphate from D-ribulose 5-phosphate (non-oxidative stage): step 1/1. Functionally, catalyzes the reversible conversion of ribose-5-phosphate to ribulose 5-phosphate. The sequence is that of Ribose-5-phosphate isomerase A from Rhodopseudomonas palustris (strain BisA53).